The sequence spans 324 residues: HTH-type transcriptional regulator CysB (324 aa).

The region spanning Met-1–Val-59 is the HTH lysR-type domain. The H-T-H motif DNA-binding region spans Val-19 to Arg-38.

The protein belongs to the LysR transcriptional regulatory family. In terms of assembly, homotetramer.

The protein resides in the cytoplasm. Functionally, this protein is a positive regulator of gene expression for the cysteine regulon. The inducer for CysB is N-acetylserine. The sequence is that of HTH-type transcriptional regulator CysB (cysB) from Escherichia coli O157:H7.